A 29-amino-acid chain; its full sequence is Small ribosomal subunit protein uS7 (29 aa).

The segment at glutamate 1–arginine 29 is disordered. The segment covering arginine 8–arginine 29 has biased composition (basic and acidic residues).

This sequence belongs to the universal ribosomal protein uS7 family. As to quaternary structure, part of the 30S ribosomal subunit.

Functionally, one of the primary rRNA binding proteins, it binds directly to 16S rRNA where it nucleates assembly of the head domain of the 30S subunit. Is located at the subunit interface close to the decoding center. The sequence is that of Small ribosomal subunit protein uS7 (rps7) from Methanosarcina thermophila.